Reading from the N-terminus, the 510-residue chain is Light-independent protochlorophyllide reductase subunit B (510 aa).

Residue Asp36 participates in [4Fe-4S] cluster binding. Asp296 serves as the catalytic Proton donor. Residue 431–432 (GM) participates in substrate binding.

Belongs to the ChlB/BchB/BchZ family. As to quaternary structure, protochlorophyllide reductase is composed of three subunits; ChlL, ChlN and ChlB. Forms a heterotetramer of two ChlB and two ChlN subunits. It depends on [4Fe-4S] cluster as a cofactor.

It localises to the plastid. It is found in the chloroplast. The enzyme catalyses chlorophyllide a + oxidized 2[4Fe-4S]-[ferredoxin] + 2 ADP + 2 phosphate = protochlorophyllide a + reduced 2[4Fe-4S]-[ferredoxin] + 2 ATP + 2 H2O. It functions in the pathway porphyrin-containing compound metabolism; chlorophyll biosynthesis (light-independent). Functionally, component of the dark-operative protochlorophyllide reductase (DPOR) that uses Mg-ATP and reduced ferredoxin to reduce ring D of protochlorophyllide (Pchlide) to form chlorophyllide a (Chlide). This reaction is light-independent. The NB-protein (ChlN-ChlB) is the catalytic component of the complex. In Angiopteris evecta (Mule's foot fern), this protein is Light-independent protochlorophyllide reductase subunit B.